A 512-amino-acid polypeptide reads, in one-letter code: Maturase K (512 aa).

Belongs to the intron maturase 2 family. MatK subfamily.

It localises to the plastid. It is found in the chloroplast. Functionally, usually encoded in the trnK tRNA gene intron. Probably assists in splicing its own and other chloroplast group II introns. This chain is Maturase K, found in Soldanella alpina (Alpine snowbell).